The chain runs to 226 residues: Cytidylate kinase (226 aa).

12–20 (GPSGAGKGT) lines the ATP pocket.

This sequence belongs to the cytidylate kinase family. Type 1 subfamily.

It localises to the cytoplasm. It carries out the reaction CMP + ATP = CDP + ADP. The catalysed reaction is dCMP + ATP = dCDP + ADP. The chain is Cytidylate kinase from Xanthomonas campestris pv. campestris (strain 8004).